Here is a 399-residue protein sequence, read N- to C-terminus: Elongation factor Tu (399 aa).

A tr-type G domain is found at 10–209; sequence KPHVNVGTIG…EVDKYIPTPQ (200 aa). The interval 19–26 is G1; that stretch reads GHVDHGKT. 19 to 26 is a binding site for GTP; that stretch reads GHVDHGKT. Thr-26 is a binding site for Mg(2+). The segment at 60 to 64 is G2; it reads GITIA. The G3 stretch occupies residues 81 to 84; that stretch reads DCPG. Residues 81-85 and 136-139 contribute to the GTP site; these read DCPGH and NKQD. Residues 136–139 form a G4 region; sequence NKQD. The interval 174-176 is G5; the sequence is SAL.

Belongs to the TRAFAC class translation factor GTPase superfamily. Classic translation factor GTPase family. EF-Tu/EF-1A subfamily. Monomer.

The protein resides in the cytoplasm. It catalyses the reaction GTP + H2O = GDP + phosphate + H(+). GTP hydrolase that promotes the GTP-dependent binding of aminoacyl-tRNA to the A-site of ribosomes during protein biosynthesis. In Helicobacter hepaticus (strain ATCC 51449 / 3B1), this protein is Elongation factor Tu.